The sequence spans 180 residues: Translation machinery-associated protein 16 homolog (180 aa).

Positions 1-12 (MTNLRKELEKCK) are enriched in basic and acidic residues. Residues 1–32 (MTNLRKELEKCKHPNSRKTKALGKKARRQNNK) are disordered. The segment covering 13 to 32 (HPNSRKTKALGKKARRQNNK) has biased composition (basic residues).

This sequence belongs to the TMA16 family.

The chain is Translation machinery-associated protein 16 homolog from Drosophila melanogaster (Fruit fly).